A 69-amino-acid polypeptide reads, in one-letter code: FMRFamide-like neuropeptides 24 (69 aa).

The signal sequence occupies residues 1–25; sequence MLSSRTSSIILILAILVAIMAVAQC. Residues 26–51 constitute a propeptide that is removed on maturation; that stretch reads RNIQYDVEEMTPEAAFRYAQWGEIPH. Phenylalanine 64 bears the Phenylalanine amide mark. Positions 68–69 are excised as a propeptide; it reads SI.

The protein belongs to the FARP (FMRFamide related peptide) family.

It is found in the secreted. Functionally, probable FMRFamide-like neuropeptides. Plays a role in behaviors associated with a sleep-like state induced by stress (SIS), acting in concert with the FMRFamide related peptide flp-13 and neuropeptide-like protein nlp-8. This is FMRFamide-like neuropeptides 24 from Caenorhabditis elegans.